The chain runs to 391 residues: Protein ABCI12, chloroplastic (391 aa).

A chloroplast-targeting transit peptide spans 1–63 (MNHSNLANPT…LAAKRVFIVR (63 aa)). The next 5 membrane-spanning stretches (helical) occupy residues 134 to 154 (ANLV…ILVL), 168 to 188 (LLSG…PPML), 229 to 249 (VGST…ICLA), 263 to 283 (FLFP…TLLL), and 370 to 390 (FASV…EYFL).

It is found in the plastid. It localises to the chloroplast. The protein localises to the membrane. In Arabidopsis thaliana (Mouse-ear cress), this protein is Protein ABCI12, chloroplastic (ABCI12).